A 385-amino-acid polypeptide reads, in one-letter code: Zinc finger protein B385R (385 aa).

The C2H2-type zinc-finger motif lies at 166-190; it reads LQCPNCGCIQELMGTIFDETHFYNH.

It belongs to the asfivirus B385R family.

In Ornithodoros (relapsing fever ticks), this protein is Zinc finger protein B385R.